Consider the following 129-residue polypeptide: Small ribosomal subunit protein uS13 (129 aa).

Basic residues predominate over residues 95 to 114 (NLPVRGQRTKTNARTRRGPR). A disordered region spans residues 95 to 129 (NLPVRGQRTKTNARTRRGPRKTVAGRGQKRGATKK).

This sequence belongs to the universal ribosomal protein uS13 family. As to quaternary structure, part of the 30S ribosomal subunit. Forms a loose heterodimer with protein S19. Forms two bridges to the 50S subunit in the 70S ribosome.

In terms of biological role, located at the top of the head of the 30S subunit, it contacts several helices of the 16S rRNA. In the 70S ribosome it contacts the 23S rRNA (bridge B1a) and protein L5 of the 50S subunit (bridge B1b), connecting the 2 subunits; these bridges are implicated in subunit movement. Contacts the tRNAs in the A and P-sites. This chain is Small ribosomal subunit protein uS13, found in Dehalococcoides mccartyi (strain ATCC BAA-2100 / JCM 16839 / KCTC 5957 / BAV1).